The primary structure comprises 170 residues: Adenine phosphoribosyltransferase (170 aa).

Belongs to the purine/pyrimidine phosphoribosyltransferase family. In terms of assembly, homodimer.

The protein resides in the cytoplasm. It carries out the reaction AMP + diphosphate = 5-phospho-alpha-D-ribose 1-diphosphate + adenine. It functions in the pathway purine metabolism; AMP biosynthesis via salvage pathway; AMP from adenine: step 1/1. Catalyzes a salvage reaction resulting in the formation of AMP, that is energically less costly than de novo synthesis. The chain is Adenine phosphoribosyltransferase from Mycoplasma capricolum subsp. capricolum (strain California kid / ATCC 27343 / NCTC 10154).